The primary structure comprises 309 residues: Protein FdhE (309 aa).

This sequence belongs to the FdhE family.

The protein localises to the cytoplasm. Necessary for formate dehydrogenase activity. In Salmonella typhimurium (strain LT2 / SGSC1412 / ATCC 700720), this protein is Protein FdhE.